Reading from the N-terminus, the 420-residue chain is DNA repair protein NreA (420 aa).

A PIP motif motif is present at residues 413-420; it reads QTDIFDFA.

It belongs to the Nre family. In terms of assembly, interacts with the DNA polymerase sliding clamp (PCNA) via the PIP (PCNA-interacting peptide) motif.

Its function is as follows. Involved in DNA damage repair. Works together with the UvrABC proteins in repairing DNA damage resulting from exposure to the DNA damaging agent mitomycin C (MMC). The polypeptide is DNA repair protein NreA (Haloferax volcanii (strain ATCC 29605 / DSM 3757 / JCM 8879 / NBRC 14742 / NCIMB 2012 / VKM B-1768 / DS2) (Halobacterium volcanii)).